The chain runs to 130 residues: DNA-directed RNA polymerase subunit omega (130 aa).

Residues 108–130 (TEEELLKGLEGLAPPEEQPEEDE) are disordered.

The protein belongs to the RNA polymerase subunit omega family. The RNAP catalytic core consists of 2 alpha, 1 beta, 1 beta' and 1 omega subunit. When a sigma factor is associated with the core the holoenzyme is formed, which can initiate transcription.

It carries out the reaction RNA(n) + a ribonucleoside 5'-triphosphate = RNA(n+1) + diphosphate. Its function is as follows. Promotes RNA polymerase assembly. Latches the N- and C-terminal regions of the beta' subunit thereby facilitating its interaction with the beta and alpha subunits. The sequence is that of DNA-directed RNA polymerase subunit omega from Rhodopseudomonas palustris (strain ATCC BAA-98 / CGA009).